A 1073-amino-acid chain; its full sequence is Semaphorin-6D (1073 aa).

The signal sequence occupies residues 1 to 20 (MGFLLLWFCVLFLLVSRLRA). At 21–662 (VSFPEDDEPL…GESNQMVHMN (642 aa)) the chain is on the extracellular side. One can recognise a Sema domain in the interval 27-512 (DEPLNTVDYH…FSSCVVRIPL (486 aa)). N-linked (GlcNAc...) asparagine glycosylation is present at Asn-51. Disulfide bonds link Cys-108-Cys-118, Cys-136-Cys-145, Cys-259-Cys-370, and Cys-284-Cys-329. An N-linked (GlcNAc...) asparagine glycan is attached at Asn-283. N-linked (GlcNAc...) asparagine glycans are attached at residues Asn-435 and Asn-461. 4 disulfides stabilise this stretch: Cys-477–Cys-506, Cys-515–Cys-533, Cys-521–Cys-568, and Cys-525–Cys-541. Residues 514–569 (RCERYGSCKKSCIASRDPYCGWLSQGVCERVTLGMLPGGYEQDTEYGNTAHLGDCH) form the PSI domain. Asn-631 carries an N-linked (GlcNAc...) asparagine glycan. A helical transmembrane segment spans residues 663-683 (VLITCVFAAFVLGAFIAGVAV). Over 684–1073 (YCYRDMFVRK…SVRPLNKYTY (390 aa)) the chain is Cytoplasmic. Phosphoserine occurs at positions 723, 734, and 744. 4 disordered regions span residues 745-825 (RKEL…GHIP), 839-876 (TSFS…VDSR), 919-986 (PPKV…SPNG), and 1021-1073 (LQPS…KYTY). Thr-773 carries the post-translational modification Phosphothreonine. The segment covering 790–806 (SHSEKAHSHGASRKEHP) has biased composition (basic and acidic residues). Residues Ser-931, Ser-957, and Ser-983 each carry the phosphoserine modification. Over residues 931 to 942 (SPPSTLPRNSPT) the composition is skewed to polar residues. 2 stretches are compositionally biased toward polar residues: residues 1021 to 1037 (LQPS…NGTL) and 1059 to 1073 (VPQT…KYTY).

The protein belongs to the semaphorin family. Expressed in brain and lung.

The protein resides in the cell membrane. Functionally, shows growth cone collapsing activity on dorsal root ganglion (DRG) neurons in vitro. May be a stop signal for the DRG neurons in their target areas, and possibly also for other neurons. May also be involved in the maintenance and remodeling of neuronal connections. Ligand of TREM2 with PLXNA1 as coreceptor in dendritic cells, plays a role in the generation of immune responses and skeletal homeostasis. This Mus musculus (Mouse) protein is Semaphorin-6D (Sema6d).